Reading from the N-terminus, the 220-residue chain is MVKGMYHYIAQLWKRPYEGDMLTLMRQRLIKWRREPAIIRIEKPTRLDRARALGYKAKQGFIIVRVRVRKGGLRKQRPNKGRRPKRMGIYGFAPSKSLRLIAEERAARKYPNLEVLNSYYVGEDGNYKWYEVILVDPHHPAICNDPDIKWICEKQHRRRVFRGLTSAGKKMRGLRKSRGLKYTIKYKWKRKQKERLLKKRHEASRGAREPWQIVLKKAEE.

Belongs to the eukaryotic ribosomal protein eL15 family.

This chain is Large ribosomal subunit protein eL15, found in Staphylothermus marinus (strain ATCC 43588 / DSM 3639 / JCM 9404 / F1).